We begin with the raw amino-acid sequence, 749 residues long: Ribosomal RNA large subunit methyltransferase K/L (749 aa).

A THUMP domain is found at 43 to 154 (QGYKVCLWSR…KDKATIYLDL (112 aa)). Positions 386–406 (VEPVAPKKTNKETPEPINPWT) are disordered.

It belongs to the methyltransferase superfamily. RlmKL family.

It localises to the cytoplasm. The catalysed reaction is guanosine(2445) in 23S rRNA + S-adenosyl-L-methionine = N(2)-methylguanosine(2445) in 23S rRNA + S-adenosyl-L-homocysteine + H(+). It carries out the reaction guanosine(2069) in 23S rRNA + S-adenosyl-L-methionine = N(2)-methylguanosine(2069) in 23S rRNA + S-adenosyl-L-homocysteine + H(+). Functionally, specifically methylates the guanine in position 2445 (m2G2445) and the guanine in position 2069 (m7G2069) of 23S rRNA. In Psychromonas ingrahamii (strain DSM 17664 / CCUG 51855 / 37), this protein is Ribosomal RNA large subunit methyltransferase K/L.